Here is a 219-residue protein sequence, read N- to C-terminus: Mucosal pentraxin (219 aa).

Positions 1–19 (MEKLIVGILFLSVLSGSVA) are cleaved as a signal peptide. The Pentraxin (PTX) domain maps to 24–219 (KGKAFIFPQE…YVVIKPKLWP (196 aa)). A glycan (N-linked (GlcNAc...) asparagine) is linked at Asn-51. Cys-55 and Cys-114 are joined by a disulfide. Residues Asp-77, Asn-78, Glu-155, Gln-156, Asp-157, and Gln-167 each coordinate Ca(2+).

It belongs to the pentraxin family. In terms of assembly, homopentamer. Pentraxin (or pentaxin) have a discoid arrangement of 5 non-covalently bound subunits. The cofactor is Ca(2+). Expressed in colon.

It is found in the secreted. The protein is Mucosal pentraxin (Mptx1) of Mus musculus (Mouse).